A 150-amino-acid polypeptide reads, in one-letter code: Small ribosomal subunit protein uS7cz/uS7cy (150 aa).

Belongs to the universal ribosomal protein uS7 family. As to quaternary structure, part of the 30S ribosomal subunit.

The protein localises to the plastid. It is found in the chloroplast. Functionally, one of the primary rRNA binding proteins, it binds directly to 16S rRNA where it nucleates assembly of the head domain of the 30S subunit. This Adiantum capillus-veneris (Maidenhair fern) protein is Small ribosomal subunit protein uS7cz/uS7cy (rps7-A).